A 253-amino-acid polypeptide reads, in one-letter code: 5-oxoprolinase subunit A (253 aa).

It belongs to the LamB/PxpA family. As to quaternary structure, forms a complex composed of PxpA, PxpB and PxpC.

It carries out the reaction 5-oxo-L-proline + ATP + 2 H2O = L-glutamate + ADP + phosphate + H(+). Its function is as follows. Catalyzes the cleavage of 5-oxoproline to form L-glutamate coupled to the hydrolysis of ATP to ADP and inorganic phosphate. The polypeptide is 5-oxoprolinase subunit A (Bacillus cereus (strain ZK / E33L)).